A 422-amino-acid polypeptide reads, in one-letter code: Elongation factor 1-alpha (422 aa).

The tr-type G domain occupies 5-221; the sequence is KPHMNLAVIG…DELKEPEKPS (217 aa). Residues 14–21 are G1; it reads GHIDHGKS. 14–21 lines the GTP pocket; the sequence is GHIDHGKS. A Mg(2+)-binding site is contributed by S21. The tract at residues 70 to 74 is G2; the sequence is GITID. The interval 91 to 94 is G3; the sequence is DCPG. GTP is bound by residues 91–95 and 146–149; these read DCPGH and NKMD. The interval 146–149 is G4; that stretch reads NKMD. The segment at 185-187 is G5; the sequence is SAF.

The protein belongs to the TRAFAC class translation factor GTPase superfamily. Classic translation factor GTPase family. EF-Tu/EF-1A subfamily.

Its subcellular location is the cytoplasm. It catalyses the reaction GTP + H2O = GDP + phosphate + H(+). Functionally, GTP hydrolase that promotes the GTP-dependent binding of aminoacyl-tRNA to the A-site of ribosomes during protein biosynthesis. This chain is Elongation factor 1-alpha, found in Methanosarcina acetivorans (strain ATCC 35395 / DSM 2834 / JCM 12185 / C2A).